The sequence spans 205 residues: Protein-L-isoaspartate O-methyltransferase (205 aa).

Residue Ser56 is part of the active site.

This sequence belongs to the methyltransferase superfamily. L-isoaspartyl/D-aspartyl protein methyltransferase family.

Its subcellular location is the cytoplasm. The catalysed reaction is [protein]-L-isoaspartate + S-adenosyl-L-methionine = [protein]-L-isoaspartate alpha-methyl ester + S-adenosyl-L-homocysteine. Functionally, catalyzes the methyl esterification of L-isoaspartyl residues in peptides and proteins that result from spontaneous decomposition of normal L-aspartyl and L-asparaginyl residues. It plays a role in the repair and/or degradation of damaged proteins. This is Protein-L-isoaspartate O-methyltransferase from Aeromonas salmonicida (strain A449).